Consider the following 740-residue polypeptide: Alpha-1,6-mannosylglycoprotein 6-beta-N-acetylglucosaminyltransferase A (740 aa).

Residues 1-13 (MAFFSPWKLSSQK) lie on the Cytoplasmic side of the membrane. Residues 14 to 30 (LGFFLVTFGFIWGMMLL) traverse the membrane as a helical; Signal-anchor for type II membrane protein segment. Topologically, residues 31–740 (HFTIQQRTQP…GQVALCKDCL (710 aa)) are lumenal. N-linked (GlcNAc...) asparagine glycosylation is found at N109, N114, and N117. Cystine bridges form between C144–C182, C155–C195, C171–C337, C371–C625, C648–C723, C652–C725, C659–C712, C680–C701, and C736–C739. The tract at residues 212 to 740 (NSLAEIRTDF…GQVALCKDCL (529 aa)) is sufficient for catalytic activity. An N-linked (GlcNAc...) asparagine glycan is attached at N333. 377–378 (DS) is a binding site for substrate. N432 and N446 each carry an N-linked (GlcNAc...) asparagine glycan. UDP-N-acetyl-alpha-D-glucosamine is bound at residue E525. K553 contacts substrate.

This sequence belongs to the glycosyltransferase 18 family. Post-translationally, N-glycosylated. In terms of processing, a secreted form is released from the membrane after cleavage by gamma-secretase. Detected in kidney (at protein level). Detected in kidney.

It is found in the golgi apparatus membrane. The protein localises to the secreted. It carries out the reaction N(4)-{beta-D-GlcNAc-(1-&gt;2)-[beta-D-GlcNAc-(1-&gt;4)]-alpha-D-Man-(1-&gt;3)-[beta-D-GlcNAc-(1-&gt;2)-alpha-D-Man-(1-&gt;6)]-beta-D-Man-(1-&gt;4)-beta-D-GlcNAc-(1-&gt;4)-beta-D-GlcNAc}-L-asparaginyl-[protein] + UDP-N-acetyl-alpha-D-glucosamine = N(4)-{beta-D-GlcNAc-(1-&gt;2)-[beta-D-GlcNAc-(1-&gt;4)]-alpha-D-Man-(1-&gt;3)-[beta-D-GlcNAc-(1-&gt;2)-[beta-D-GlcNAc-(1-&gt;6)]-alpha-D-Man-(1-&gt;6)]-beta-D-Man-(1-&gt;4)-beta-D-GlcNAc-(1-&gt;4)-beta-D-GlcNAc}-L-asparaginyl-[protein] + UDP + H(+). Its pathway is protein modification; protein glycosylation. In terms of biological role, catalyzes the addition of N-acetylglucosamine (GlcNAc) in beta 1-6 linkage to the alpha-linked mannose of biantennary N-linked oligosaccharides. Catalyzes an important step in the biosynthesis of branched, complex-type N-glycans, such as those found on EGFR, TGFR (TGF-beta receptor) and CDH2. Via its role in the biosynthesis of complex N-glycans, plays an important role in the activation of cellular signaling pathways, reorganization of the actin cytoskeleton, cell-cell adhesion and cell migration. MGAT5-dependent EGFR N-glycosylation enhances the interaction between EGFR and LGALS3 and thereby prevents rapid EGFR endocytosis and prolongs EGFR signaling. Required for efficient interaction between TGFB1 and its receptor. Enhances activation of intracellular signaling pathways by several types of growth factors, including FGF2, PDGF, IGF, TGFB1 and EGF. MGAT5-dependent CDH2 N-glycosylation inhibits CDH2-mediated homotypic cell-cell adhesion and contributes to the regulation of downstream signaling pathways. Promotes cell migration. Contributes to the regulation of the inflammatory response. MGAT5-dependent TCR N-glycosylation enhances the interaction between TCR and LGALS3, limits agonist-induced TCR clustering, and thereby dampens TCR-mediated responses to antigens. Required for normal leukocyte evasation and accumulation at sites of inflammation. Inhibits attachment of monocytes to the vascular endothelium and subsequent monocyte diapedesis. Its function is as follows. Promotes proliferation of umbilical vein endothelial cells and angiogenesis, at least in part by promoting the release of the growth factor FGF2 from the extracellular matrix. The protein is Alpha-1,6-mannosylglycoprotein 6-beta-N-acetylglucosaminyltransferase A (Mgat5) of Rattus norvegicus (Rat).